We begin with the raw amino-acid sequence, 270 residues long: Thiosulfate dehydrogenase (270 aa).

A signal peptide spans 1–27 (MRGDVRVHTASPIAAAWLLAVGLVAHA). 2 Cytochrome c domains span residues 44-158 (PDGA…PVGA) and 174-260 (PDGV…LTHP). The heme c site is built by Cys-76, Cys-79, His-80, Cys-187, Cys-190, and His-191.

In terms of assembly, monomer. Post-translationally, binds 2 heme c groups covalently per subunit.

The protein localises to the periplasm. The enzyme catalyses 2 thiosulfate + 2 Fe(III)-[cytochrome c] = tetrathionate + 2 Fe(II)-[cytochrome c] + 2 H(+). Its function is as follows. Catalyzes the oxidation of 2 molecules of thiosulfate to tetrathionate. The protein is Thiosulfate dehydrogenase (tsdA) of Allochromatium vinosum (strain ATCC 17899 / DSM 180 / NBRC 103801 / NCIMB 10441 / D) (Chromatium vinosum).